The chain runs to 445 residues: Protein phosphatase 2C 53 (445 aa).

The region spanning 124-435 (LWGLESICGR…DNITVVVIDL (312 aa)) is the PPM-type phosphatase domain. Positions 180, 181, 362, and 426 each coordinate Mn(2+).

The protein belongs to the PP2C family. In terms of assembly, interacts with PYL10, SAPK8 and SAPK10. Binding to PYL10 is dependent on the presence of abscisic acid (ABA). Interacts with PYL3, PYL5, PYL9 and PYL10. Binding to PYL9 and PYL10 is dependent on the presence of ABA. Requires Mg(2+) as cofactor. It depends on Mn(2+) as a cofactor. In terms of tissue distribution, expressed in leaf blades, leaf sheaths and lamina joints. Expressed at low levels in roots, stems, flowers and panicles.

The protein resides in the cytoplasm. It localises to the cytosol. It is found in the nucleus. The enzyme catalyses O-phospho-L-seryl-[protein] + H2O = L-seryl-[protein] + phosphate. It catalyses the reaction O-phospho-L-threonyl-[protein] + H2O = L-threonyl-[protein] + phosphate. Its activity is regulated as follows. Repressed by abscisic acid-bound PYL1. Its function is as follows. Protein phosphatase that acts as a negative regulator of abscisic acid (ABA) signaling. Involved in the regulation of root architecture development and drought resistance. Can dephosphorylate SAPK8 and SAPK10 in vitro. Together with PYL10, SAPK8 and SAPK10, may form an ABA signaling module involved in stress response. The sequence is that of Protein phosphatase 2C 53 from Oryza sativa subsp. japonica (Rice).